Here is a 500-residue protein sequence, read N- to C-terminus: NAD(P)H-quinone oxidoreductase chain 4, chloroplastic (500 aa).

The next 15 helical transmembrane spans lie at 4–24 (FPWLTTVVVFPIFAGLLLFFF), 37–57 (ICICVLELLLTTYAFCYHFEL), 87–107 (IGPILLTGFITTLATLAAWPV), 113–130 (LFYFLMLAMYSGQIGSFS), 134–154 (LLLFFIMWEFELIPVYLLLSM), 167–187 (FILYTAGGSIFLLMGVLGIGL), 207–227 (IALEILFYIGFLIAFAVKSPI), 242–262 (HYSTCMLLAGILLKMGAYGLV), 272–292 (AHSIFSPWLIIVGIIQIIYAA), 305–325 (IAYSSVSHMGFIIIGIGSISD), 330–350 (GAILQIISHGFIGAALFFLAG), 364–384 (MGGLAIPIPKIFTTFSILSMA), 386–406 (LALPGMSGFVAELIVFFGIIT), 417–437 (VITLVMAIGIILTPIYLLSML), and 463–483 (FVAISILIPVIGIGIYPDFVF).

This sequence belongs to the complex I subunit 4 family.

Its subcellular location is the plastid. It localises to the chloroplast thylakoid membrane. The catalysed reaction is a plastoquinone + NADH + (n+1) H(+)(in) = a plastoquinol + NAD(+) + n H(+)(out). It catalyses the reaction a plastoquinone + NADPH + (n+1) H(+)(in) = a plastoquinol + NADP(+) + n H(+)(out). The sequence is that of NAD(P)H-quinone oxidoreductase chain 4, chloroplastic from Cucumis sativus (Cucumber).